We begin with the raw amino-acid sequence, 233 residues long: C-type lectin domain family 2 member D5 (233 aa).

The interval 1–52 is disordered; the sequence is MPSSAHLQDPPPLLSRTLTQNEGQTSLRQSSSCGPSAASASESLSGSTESRI. The Cytoplasmic segment spans residues 1–76; sequence MPSSAHLQDP…PLEYPAGLYC (76 aa). The segment covering 16–29 has biased composition (polar residues); the sequence is RTLTQNEGQTSLRQ. Positions 30 to 50 are enriched in low complexity; the sequence is SSSCGPSAASASESLSGSTES. The chain crosses the membrane as a helical; Signal-anchor for type II membrane protein span at residues 77 to 97; sequence CYVVIIVLSVAVVALSVALSV. Over 98 to 233 the chain is Extracellular; the sequence is KKTAQISTIN…KPNSYTSQCL (136 aa). One can recognise a C-type lectin domain in the interval 119-228; the sequence is VGNKCFYFNE…KSICRKPNSY (110 aa). Residue asparagine 132 is glycosylated (N-linked (GlcNAc...) asparagine).

It is found in the cell membrane. Its function is as follows. Lectin-type cell surface receptor. This Rattus norvegicus (Rat) protein is C-type lectin domain family 2 member D5 (Ocil).